The chain runs to 577 residues: Probable ATP-dependent RNA helicase DDX55 homolog (577 aa).

The Q motif signature appears at 7 to 37; sequence AVATKTYREKLGPEILEVFDKSYKSFTDVQV. In terms of domain architecture, Helicase ATP-binding spans 40–218; sequence GTHLLNLSDV…VFGLRNAKQV (179 aa). ATP is bound at residue 53-60; sequence SPTGSGKT. Residues 166 to 169 carry the DEAD box motif; that stretch reads DEAD. The region spanning 231–393 is the Helicase C-terminal domain; sequence TLKNYFVECP…EVKVPTSTSR (163 aa). The disordered stretch occupies residues 508–577; that stretch reads AKEKKRREKE…LSKKEIKDVL (70 aa). Over residues 510–530 the composition is skewed to basic residues; that stretch reads EKKRREKEARKMKRAGGRFKS.

It belongs to the DEAD box helicase family. DDX55/SPB4 subfamily.

It carries out the reaction ATP + H2O = ADP + phosphate + H(+). Functionally, probable ATP-binding RNA helicase. This Caenorhabditis briggsae protein is Probable ATP-dependent RNA helicase DDX55 homolog.